Consider the following 1237-residue polypeptide: GTPase activating protein BUD2 (1237 aa).

Positions 79–110 (GSGKSSISQPPPTTSTRRNLLRKSSNLNSSDQ) are enriched in low complexity. The disordered stretch occupies residues 79 to 124 (GSGKSSISQPPPTTSTRRNLLRKSSNLNSSDQSHSKSSEDNEHQPP). The span at 111–121 (SHSKSSEDNEH) shows a compositional bias: basic and acidic residues. A C2 domain is found at 381-503 (NVEHPQLYDF…KQIKTTSTIM (123 aa)). In terms of domain architecture, Ras-GAP spans 637–905 (NSQDQAVSNS…PEIYDYFDKL (269 aa)). Disordered regions lie at residues 721-762 (SIHE…ERER) and 969-1007 (NNNGSMSNLGTPVNSPSRDMEREQDRSRSRSQSGTPDLD). The span at 735 to 754 (DVSDDDDDDDDNSSDDDADY) shows a compositional bias: acidic residues. The span at 986 to 996 (RDMEREQDRSR) shows a compositional bias: basic and acidic residues. A coiled-coil region spans residues 1065 to 1093 (NITLKDIQKQSTKIMNKIQELEIYLENYE). The segment at 1170 to 1204 (NGGMGNRNGHDVNGHNNNNNNNNNNTGDGYNETDR) is disordered. The segment covering 1183-1199 (GHNNNNNNNNNNTGDGY) has biased composition (low complexity).

The protein resides in the cytoplasm. It is found in the cell cortex. It localises to the cell tip. Its subcellular location is the cell septum. In terms of biological role, GTPase activating protein (GAP) for RSR1 which is involved in the polarization of yeast and hyphal cells. Directs the site of new daughter cell growth in yeast and hyphal cells. Important for hyphae to maintain linear growth and necessary for hyphal responses to directional cues in the environment (tropisms). Required for correct localization of the septin rings and stabilization of the polarisome at hyphal tips. Involved in cell adhesion. This is GTPase activating protein BUD2 (BUD2) from Candida albicans (strain SC5314 / ATCC MYA-2876) (Yeast).